Reading from the N-terminus, the 83-residue chain is Small ribosomal subunit protein bS16 (83 aa).

The protein belongs to the bacterial ribosomal protein bS16 family.

This Cupriavidus taiwanensis (strain DSM 17343 / BCRC 17206 / CCUG 44338 / CIP 107171 / LMG 19424 / R1) (Ralstonia taiwanensis (strain LMG 19424)) protein is Small ribosomal subunit protein bS16.